We begin with the raw amino-acid sequence, 1099 residues long: Transmembrane protein 132C (1099 aa).

An N-terminal signal peptide occupies residues 1–31 (MRSEGAAPRRAARYGALSLVLATLLGQVTES). Residues 32–915 (RGVMDNIQRF…LMQTAHGLSD (884 aa)) lie on the Extracellular side of the membrane. The N-linked (GlcNAc...) asparagine glycan is linked to Asn-95. Residues 237 to 260 (GDCTGGDTRKDNAIRPGKDGQEGR) form a disordered region. N-linked (GlcNAc...) asparagine glycans are attached at residues Asn-314 and Asn-371. A disordered region spans residues 801-872 (DADSSQTGEK…NNVGKSGRRD (72 aa)). The span at 813–849 (EEIKNHASDRRQKIQDLERPGQDELYHGNFPGDREEG) shows a compositional bias: basic and acidic residues. A helical transmembrane segment spans residues 916-936 (LEIGMYALLGVFCLAILVFLI). Over 937–1099 (NCATFAFKYR…TYLEKFQDSV (163 aa)) the chain is Cytoplasmic. The tract at residues 1002–1045 (NHLLLNGGSQKPTQSQVHRPPGSGGRQTREPRQEPANSPTSKMK) is disordered. Positions 1008-1018 (GGSQKPTQSQV) are enriched in polar residues.

It belongs to the TMEM132 family.

The protein localises to the membrane. The chain is Transmembrane protein 132C (Tmem132c) from Mus musculus (Mouse).